The sequence spans 238 residues: 6-phosphogluconolactonase (238 aa).

It belongs to the glucosamine/galactosamine-6-phosphate isomerase family. 6-phosphogluconolactonase subfamily.

It carries out the reaction 6-phospho-D-glucono-1,5-lactone + H2O = 6-phospho-D-gluconate + H(+). It functions in the pathway carbohydrate degradation; pentose phosphate pathway; D-ribulose 5-phosphate from D-glucose 6-phosphate (oxidative stage): step 2/3. In terms of biological role, hydrolysis of 6-phosphogluconolactone to 6-phosphogluconate. The polypeptide is 6-phosphogluconolactonase (pgl) (Pseudomonas aeruginosa (strain ATCC 15692 / DSM 22644 / CIP 104116 / JCM 14847 / LMG 12228 / 1C / PRS 101 / PAO1)).